A 1463-amino-acid chain; its full sequence is Secretory phospholipase A2 receptor (1463 aa).

The first 20 residues, 1-20, serve as a signal peptide directing secretion; sequence MPLLSLSLLLLLLQVPAGSA. Topologically, residues 21-1392 are extracellular; sequence ETAAWAVTPE…IHTVKKHPGK (1372 aa). Residues 38-115 enclose the Ricin B-type lectin domain; sequence KGIFIIQSEN…CDSTHVSLKW (78 aa). Asn93 carries an N-linked (GlcNAc...) asparagine glycan. The Fibronectin type-II domain occupies 173–221; that stretch reads AHGTPCMFPFQYNQQWHHECTREGREDNLLWCATTSRYERDEKWGFCPD. 16 disulfide bridges follow: Cys178-Cys204, Cys192-Cys219, Cys260-Cys354, Cys330-Cys346, Cys406-Cys501, Cys478-Cys493, Cys617-Cys634, Cys699-Cys796, Cys774-Cys788, Cys840-Cys938, Cys915-Cys930, Cys992-Cys1096, Cys1068-Cys1088, Cys1209-Cys1223, Cys1280-Cys1377, and Cys1354-Cys1369. C-type lectin domains are found at residues 229–353, 357–500, 504–641, 646–795, 799–937, 941–1095, 1099–1230, and 1235–1376; these read CDAV…LPYV, YLNP…LFYL, TGLV…KAMS, PVEN…REWI, PRDV…MPSI, KKVW…YGFV, MQDA…LQGA, and PTET…KGFI. Asn454 carries an N-linked (GlcNAc...) asparagine glycan. Asn1057 is a glycosylation site (N-linked (GlcNAc...) asparagine). A helical membrane pass occupies residues 1393-1421; that stretch reads GPSHSVIPLTVALTLLVILAISTLSFCMY. At 1422-1463 the chain is on the cytoplasmic side; the sequence is KHSHIIFGRLAQFRNPYYPSANFSTVHLEENILISDLEKNDQ. The short motif at 1436-1442 is the Endocytosis signal element; it reads NPYYPSA.

In terms of assembly, interacts with sPLA2-IB/PLA2G1B; this interaction mediates intracellular signaling as well as clearance of extracellular sPLA2-IB/PLA2G1B via endocytotic pathway. Interacts with sPLA2-X/PLA2G10; this interaction mediates sPLA2-X/PLA2G10 clearance and inactivation. In terms of processing, the secretory phospholipase A2 receptor form may be produced by the action of metalloproteinases. It contains all extracellular domains and only lacks transmembrane and cytosolic regions. It is however unclear whether this form is produced by proteolytic cleavage as suggested by some experiments, or by alternative splicing.

It localises to the cell membrane. Its subcellular location is the secreted. Functionally, receptor for secretory phospholipase A2 (sPLA2). Also able to bind to snake PA2-like toxins. Although its precise function remains unclear, binding of sPLA2 to its receptor participates in both positive and negative regulation of sPLA2 functions as well as clearance of sPLA2. Binding of sPLA2-IB/PLA2G1B induces various effects depending on the cell type, such as activation of the mitogen-activated protein kinase (MAPK) cascade to induce cell proliferation, the production of lipid mediators, selective release of arachidonic acid in bone marrow-derived mast cells. In neutrophils, binding of sPLA2-IB/PLA2G1B can activate p38 MAPK to stimulate elastase release and cell adhesion. May be involved in responses in pro-inflammatory cytokine productions during endotoxic shock. Also has endocytic properties and rapidly internalizes sPLA2 ligands, which is particularly important for the clearance of extracellular sPLA2s to protect their potent enzymatic activities. The soluble secretory phospholipase A2 receptor form is circulating and acts as a negative regulator of sPLA2 functions by blocking the biological functions of sPLA2-IB/PLA2G1B and sPLA2-X/PLA2G10. This chain is Secretory phospholipase A2 receptor (PLA2R1), found in Bos taurus (Bovine).